The sequence spans 360 residues: DNA replication and repair protein RecF (360 aa).

ATP is bound at residue 30–37 (GRNAQGKT).

The protein belongs to the RecF family.

The protein localises to the cytoplasm. The RecF protein is involved in DNA metabolism; it is required for DNA replication and normal SOS inducibility. RecF binds preferentially to single-stranded, linear DNA. It also seems to bind ATP. The protein is DNA replication and repair protein RecF of Desulforudis audaxviator (strain MP104C).